The primary structure comprises 396 residues: MQNMVILGATGSIGASTLSVMVNNPADFHVYGLVANASVQKMLALCITHQPEYAHMVDENAAMELKSLLPNHCVTQVTTGAEALNALVTDSRTDTVMAAIVGAAGLVPTFDAVKAGKRVLLANKEALVMSGELFMHTARASGATVLPVDSEHNAIFQCLPTNVQAQLGYCDLSANGISHILLTGSGGPFLNTDLATLSAMTPAQACNHPNWSMGPKISVDSATMMNKGLEFIEARWLFNTQAEQLKVVIHPQSVIHSMVQYRDGSVIAQMGNPDMRTPIAHCMSYPQRIGAGVEPLDFFKVGQLSFCEPDFDRFPCLRLAMQACEQGQEATTVLNAANEIAVDSFLKGRIRFTDIANVNYRCLDSVQQTRLDSIEDILQLDEQARATAVSVISTLN.

Positions 10, 11, 12, 13, and 123 each coordinate NADPH. Lysine 124 contributes to the 1-deoxy-D-xylulose 5-phosphate binding site. Residue glutamate 125 coordinates NADPH. Aspartate 149 lines the Mn(2+) pocket. 4 residues coordinate 1-deoxy-D-xylulose 5-phosphate: serine 150, glutamate 151, serine 185, and histidine 208. Position 151 (glutamate 151) interacts with Mn(2+). NADPH is bound at residue glycine 214. Residues serine 221, asparagine 226, lysine 227, and glutamate 230 each contribute to the 1-deoxy-D-xylulose 5-phosphate site. Glutamate 230 is a Mn(2+) binding site.

The protein belongs to the DXR family. Mg(2+) serves as cofactor. Mn(2+) is required as a cofactor.

It catalyses the reaction 2-C-methyl-D-erythritol 4-phosphate + NADP(+) = 1-deoxy-D-xylulose 5-phosphate + NADPH + H(+). The protein operates within isoprenoid biosynthesis; isopentenyl diphosphate biosynthesis via DXP pathway; isopentenyl diphosphate from 1-deoxy-D-xylulose 5-phosphate: step 1/6. Its function is as follows. Catalyzes the NADPH-dependent rearrangement and reduction of 1-deoxy-D-xylulose-5-phosphate (DXP) to 2-C-methyl-D-erythritol 4-phosphate (MEP). In Shewanella frigidimarina (strain NCIMB 400), this protein is 1-deoxy-D-xylulose 5-phosphate reductoisomerase.